Here is a 346-residue protein sequence, read N- to C-terminus: Inositol 2-dehydrogenase/D-chiro-inositol 3-dehydrogenase (346 aa).

This sequence belongs to the Gfo/Idh/MocA family. Homotetramer.

The catalysed reaction is myo-inositol + NAD(+) = scyllo-inosose + NADH + H(+). The enzyme catalyses 1D-chiro-inositol + NAD(+) = scyllo-inosine + NADH + H(+). It participates in polyol metabolism; myo-inositol degradation into acetyl-CoA; acetyl-CoA from myo-inositol: step 1/7. Involved in the oxidation of myo-inositol (MI) and D-chiro-inositol (DCI) to 2-keto-myo-inositol (2KMI or 2-inosose) and 1-keto-D-chiro-inositol (1KDCI), respectively. In Lacticaseibacillus casei (Lactobacillus casei), this protein is Inositol 2-dehydrogenase/D-chiro-inositol 3-dehydrogenase.